The chain runs to 491 residues: Probable protein phosphatase 2C 52 (491 aa).

Basic and acidic residues predominate over residues 1 to 11 (MVYDGAVKDQE). The interval 1–211 (MVYDGAVKDQ…REREKERERV (211 aa)) is disordered. Low complexity predominate over residues 12 to 54 (SSANPASASAALSEASAAASEVTAAAAAGAGAGAAEEGAAVSG). Over residues 66–78 (GVRHPLKHRRFRA) the composition is skewed to basic residues. Over residues 95 to 105 (VADEEASEVEQ) the composition is skewed to acidic residues. Over residues 187–211 (VEEKKHKDQENKHKEREREKERERV) the composition is skewed to basic and acidic residues. Positions 229 to 475 (SCGYSSFRGK…DNITCIVVKF (247 aa)) constitute a PPM-type phosphatase domain. 4 residues coordinate Mn(2+): Asp265, Gly266, Asp427, and Asp466.

This sequence belongs to the PP2C family. It depends on Mg(2+) as a cofactor. Mn(2+) serves as cofactor.

It catalyses the reaction O-phospho-L-seryl-[protein] + H2O = L-seryl-[protein] + phosphate. The enzyme catalyses O-phospho-L-threonyl-[protein] + H2O = L-threonyl-[protein] + phosphate. This is Probable protein phosphatase 2C 52 from Oryza sativa subsp. japonica (Rice).